A 486-amino-acid chain; its full sequence is CREB-regulated transcription coactivator 1 homolog (486 aa).

A disordered region spans residues 1 to 62 (MSNSNTPRKF…APMPIPQQGL (62 aa)). The span at 9-23 (KFSEKIAILERKQNE) shows a compositional bias: basic and acidic residues. Polar residues predominate over residues 34 to 52 (QVQSITHHPTDSSGSSTAT). Residue S76 is modified to Phosphoserine; by AMPK. The tract at residues 103 to 166 (PIQGHRSRSP…PPYNQPGQLV (64 aa)) is disordered. Positions 144 to 160 (RTPPQHPQYTPYGPPYN) are enriched in pro residues. Phosphoserine; by AMPK is present on S179. 3 disordered regions span residues 214–278 (SMPG…QSPN), 327–417 (FNQD…SNSP), and 460–486 (APPQTISNHQTPNNSFHDPGGTQMLQN). Composition is skewed to polar residues over residues 224–245 (PNSQSQQHSPQLTPQGSQQGSP), 387–402 (PESQSAPTSPHNQLDP), and 461–475 (PPQTISNHQTPNNSF).

Belongs to the TORC family. In terms of assembly, interacts with crh-1. Phosphorylated by AMPK at Ser-76 and Ser-179. Dephosphorylated by tax-6, the catalytic subunit of calcineurin. In terms of tissue distribution, expressed throughout the intestine and in head and tail neurons. Expressed in octopaminergic RIC neurons.

Its subcellular location is the nucleus. It localises to the cytoplasm. It is found in the cytosol. Functionally, transcriptional coactivator for crh-1, the homolog of vertebrate transcription factor CREB1. Regulates the transcription of metabolic genes and may have a role in mitochondrial dynamics and metabolism. Involved in modulation of lifespan. Through crh-1, counteracts the pro-lifespan-extension signals of AMPK both cell autonomously and, when expressed in neurons, at a systemic level, possibly using the catecholamine analog, octopamine, as a messenger. In Caenorhabditis elegans, this protein is CREB-regulated transcription coactivator 1 homolog.